Here is a 178-residue protein sequence, read N- to C-terminus: Crossover junction endodeoxyribonuclease RuvC (178 aa).

Residues Asp14, Glu73, and Asp145 contribute to the active site. Mg(2+)-binding residues include Asp14, Glu73, and Asp145.

The protein belongs to the RuvC family. In terms of assembly, homodimer which binds Holliday junction (HJ) DNA. The HJ becomes 2-fold symmetrical on binding to RuvC with unstacked arms; it has a different conformation from HJ DNA in complex with RuvA. In the full resolvosome a probable DNA-RuvA(4)-RuvB(12)-RuvC(2) complex forms which resolves the HJ. The cofactor is Mg(2+).

It localises to the cytoplasm. It catalyses the reaction Endonucleolytic cleavage at a junction such as a reciprocal single-stranded crossover between two homologous DNA duplexes (Holliday junction).. Its function is as follows. The RuvA-RuvB-RuvC complex processes Holliday junction (HJ) DNA during genetic recombination and DNA repair. Endonuclease that resolves HJ intermediates. Cleaves cruciform DNA by making single-stranded nicks across the HJ at symmetrical positions within the homologous arms, yielding a 5'-phosphate and a 3'-hydroxyl group; requires a central core of homology in the junction. The consensus cleavage sequence is 5'-(A/T)TT(C/G)-3'. Cleavage occurs on the 3'-side of the TT dinucleotide at the point of strand exchange. HJ branch migration catalyzed by RuvA-RuvB allows RuvC to scan DNA until it finds its consensus sequence, where it cleaves and resolves the cruciform DNA. In Nitrosomonas eutropha (strain DSM 101675 / C91 / Nm57), this protein is Crossover junction endodeoxyribonuclease RuvC.